The following is a 594-amino-acid chain: Probable glucose transporter rco-3 (594 aa).

Topologically, residues 1-13 (MAIFAMGWQKPDN) are cytoplasmic. A helical transmembrane segment spans residues 14–34 (VAGSSAPAIMVGLFVATGGLL). Residues 35–73 (LGYDTGTINGILAMKSFKDHFSTGYIDGNGQPGIYPKES) are Extracellular-facing. The helical transmembrane segment at 74 to 94 (ALIVAMLSAGTAIGALLAAPL) threads the bilayer. At 95–103 (GDHYGRRRS) the chain is on the cytoplasmic side. The chain crosses the membrane as a helical span at residues 104 to 124 (LIGAIGIFVIGAILQVCAYNI). D125 is a topological domain (extracellular). The helical transmembrane segment at 126–146 (LLVAGRTVAGVGIGIVSVLVP) threads the bilayer. Residues 147–159 (LYQSEMAPKWIRG) are Cytoplasmic-facing. A helical transmembrane segment spans residues 160–180 (TLVCTYQLSITMGLLAAAVVN). The Extracellular segment spans residues 181-193 (ILTYKLKTAAAYR). A helical membrane pass occupies residues 194-214 (VPIGLQLTWACVLALGLTVLP). Residues 215–293 (ETPRYLIKRG…TGCCLQMLQQ (79 aa)) are Cytoplasmic-facing. The chain crosses the membrane as a helical span at residues 294-314 (LTGVNFIMYYGTTFFNNAGVG). The Extracellular segment spans residues 315–318 (NPFK). The helical transmembrane segment at 319–339 (ISLIMQVINTASTIPGLFVVE) threads the bilayer. Topologically, residues 340-345 (SWGRRR) are cytoplasmic. Residues 346-366 (LLMVGAIGMAICQLLIAAFAT) form a helical membrane-spanning segment. Residues 367-378 (ASGSNNLSAQNK) lie on the Extracellular side of the membrane. N372 carries an N-linked (GlcNAc...) asparagine glycan. The helical transmembrane segment at 379–403 (VLITFVAIYIFFFAASWGPVVWVVT) threads the bilayer. At 404-415 (SEIYPLKVRAKS) the chain is on the cytoplasmic side. Residues 416–436 (MSITTASNWFLNFGIAYGTPY) form a helical membrane-spanning segment. The Extracellular segment spans residues 437 to 454 (MQTNSAASDESSIDLGSK). The helical transmembrane segment at 455-475 (VFFVWGAFCIVAVGFVWCMVY) threads the bilayer. Residues 476 to 594 (ETSKISLEQI…ASLGNIDLSY (119 aa)) are Cytoplasmic-facing. The segment at 512-594 (DLGFSDGGIP…ASLGNIDLSY (83 aa)) is disordered. The span at 524–576 (QQLQQQPQQPQQQQQQHHQQQQHQLQVDLQQSQSRTSNSSTSQTDTGGSNNTG) shows a compositional bias: low complexity.

It belongs to the major facilitator superfamily. Sugar transporter (TC 2.A.1.1) family.

The protein localises to the membrane. In terms of biological role, probable glucose transporter. Involved in sugar transport, carbon catabolite repression, and initiation of conidiophore development. The sequence is that of Probable glucose transporter rco-3 (rco-3) from Neurospora crassa (strain ATCC 24698 / 74-OR23-1A / CBS 708.71 / DSM 1257 / FGSC 987).